The sequence spans 168 residues: DAZ-associated protein 2 (168 aa).

Positions 1–13 (MNSKGQYPTQPTY) are enriched in low complexity. Residues 1–25 (MNSKGQYPTQPTYPVQPPGNPVYPQ) form a disordered region. Positions 39–42 (PPAY) match the PPAY motif. Phosphoserine is present on Ser-77.

As to quaternary structure, interacts with SOX6. Interacts with DAZ1 and DAZL. Interacts with IL17RB. May interact with FAM168B. Interacts with INCA1. Interacts with EIF4G1 and EIF4G2. Interacts (via PPAY motif) with NEDD4 (via WW domains). Interacts with transcription factor TCF4; the interaction results in localization of DAZAP2 to the nucleus. Interacts with transcription factors TCF7 and TCF7L1. Interacts with transcription factor LEF1. Interacts with serine/threonine-protein kinase HIPK2; the interaction results in phosphorylation of DAZAP2 which causes localization of DAZAP2 to the nucleus, reduces interaction of DAZAP2 with HIPK2 and prevents DAZAP2-dependent degradation of HIPK2. Interacts with ubiquitin ligase SIAH1; the interaction is decreased following phosphorylation of DAZAP2 by HIPK2. Interacts with TP53; the interaction is triggered by DNA damage. In terms of processing, ubiquitinated by SMURF2, leading to proteasomal degradation. Ubiquitinated by NEDD4, leading to proteasomal degradation. Post-translationally, following DNA damage, phosphorylated by HIPK2 which promotes DAZAP2 localization to the nucleus, reduces interaction of DAZAP2 with HIPK2 and SIAH1, and prevents DAZAP2-dependent ubiquitination of HIPK2 by E3 ubiquitin-protein ligase SIAH1 and subsequent HIPK2 proteasomal degradation.

The protein resides in the cytoplasm. The protein localises to the nucleus. It localises to the nucleus speckle. Its subcellular location is the nuclear body. It is found in the stress granule. Its function is as follows. In unstressed cells, promotes SIAH1-mediated polyubiquitination and degradation of the serine/threonine-protein kinase HIPK2, probably by acting as a loading factor that potentiates complex formation between HIPK2 and ubiquitin ligase SIAH1. In response to DNA damage, localizes to the nucleus following phosphorylation by HIPK2 and modulates the expression of a subset of TP53/p53 target genes by binding to TP53 at target gene promoters. This limits the expression of a number of cell death-mediating TP53 target genes, reducing DNA damage-induced cell death. Enhances the binding of transcription factor TCF7L2/TCF4, a Wnt signaling pathway effector, to the promoters of target genes. Plays a role in stress granule formation. In Rattus norvegicus (Rat), this protein is DAZ-associated protein 2.